The chain runs to 644 residues: Acetyl-coenzyme A synthetase 2 (644 aa).

CoA-binding positions include 189–192 (RGGK), T307, and N331. Residues 383 to 385 (GEP), 407 to 412 (DTWWQT), D496, and R511 contribute to the ATP site. S519 provides a ligand contact to CoA. Residue R522 coordinates ATP. Mg(2+) is bound by residues V533, H535, and V538. K605 is subject to N6-acetyllysine.

The protein belongs to the ATP-dependent AMP-binding enzyme family. Mg(2+) is required as a cofactor. Post-translationally, acetylated. Deacetylation by the SIR2-homolog deacetylase activates the enzyme.

It carries out the reaction acetate + ATP + CoA = acetyl-CoA + AMP + diphosphate. Its function is as follows. Catalyzes the conversion of acetate into acetyl-CoA (AcCoA), an essential intermediate at the junction of anabolic and catabolic pathways. AcsA undergoes a two-step reaction. In the first half reaction, AcsA combines acetate with ATP to form acetyl-adenylate (AcAMP) intermediate. In the second half reaction, it can then transfer the acetyl group from AcAMP to the sulfhydryl group of CoA, forming the product AcCoA. The sequence is that of Acetyl-coenzyme A synthetase 2 from Pseudomonas putida (strain ATCC 47054 / DSM 6125 / CFBP 8728 / NCIMB 11950 / KT2440).